Consider the following 262-residue polypeptide: Ribose-5-phosphate isomerase A (262 aa).

Substrate is bound by residues 33–36, 89–92, and 102–105; these read TGST, DGAD, and KGGG. Glu111 functions as the Proton acceptor in the catalytic mechanism. Position 129 (Lys129) interacts with substrate.

It belongs to the ribose 5-phosphate isomerase family. In terms of assembly, homodimer.

The enzyme catalyses aldehydo-D-ribose 5-phosphate = D-ribulose 5-phosphate. The protein operates within carbohydrate degradation; pentose phosphate pathway; D-ribose 5-phosphate from D-ribulose 5-phosphate (non-oxidative stage): step 1/1. Catalyzes the reversible conversion of ribose-5-phosphate to ribulose 5-phosphate. The protein is Ribose-5-phosphate isomerase A of Ruegeria pomeroyi (strain ATCC 700808 / DSM 15171 / DSS-3) (Silicibacter pomeroyi).